Reading from the N-terminus, the 331-residue chain is MPLKGKHLIDPDQLTFNEIHEIINLGLDMEQNPAKYSKVCEGKILGTMFFEPSTRTRLSFESAMLRMGGTVLGFSDVTTSSVTKGESVADTIRVLDDYADILVMRHPVAGTPREASQYSTVPVINGGDGGHQHPTQTLTDLITIQKYHGEIRGLKVAFCGDLLFGRTVHSLLKTLSRFPDMEFILISPPELPIPEDLKTEVIEKYNVKITETDSLEKHMAEIDILYMTRIQKERFLNQEDYEKLKDSYILTNSLLENAKQDLIILHPLPRVNEIHTEVDRDPRAKYFEQAKMGVYVRMALMALLLGNIEIAAPTLTLKVKNGTIMTKFIAS.

Positions 55 and 56 each coordinate carbamoyl phosphate. K84 serves as a coordination point for L-aspartate. The carbamoyl phosphate site is built by R105, H133, and Q136. The L-aspartate site is built by R166 and R229. Residues L268 and P269 each contribute to the carbamoyl phosphate site.

Belongs to the aspartate/ornithine carbamoyltransferase superfamily. ATCase family. As to quaternary structure, heterododecamer (2C3:3R2) of six catalytic PyrB chains organized as two trimers (C3), and six regulatory PyrI chains organized as three dimers (R2).

It catalyses the reaction carbamoyl phosphate + L-aspartate = N-carbamoyl-L-aspartate + phosphate + H(+). Its pathway is pyrimidine metabolism; UMP biosynthesis via de novo pathway; (S)-dihydroorotate from bicarbonate: step 2/3. In terms of biological role, catalyzes the condensation of carbamoyl phosphate and aspartate to form carbamoyl aspartate and inorganic phosphate, the committed step in the de novo pyrimidine nucleotide biosynthesis pathway. This is Aspartate carbamoyltransferase catalytic subunit from Alkaliphilus oremlandii (strain OhILAs) (Clostridium oremlandii (strain OhILAs)).